Consider the following 251-residue polypeptide: Hydroxyacylglutathione hydrolase (251 aa).

Zn(2+)-binding residues include H53, H55, D57, H58, H110, D127, and H165.

The protein belongs to the metallo-beta-lactamase superfamily. Glyoxalase II family. In terms of assembly, monomer. It depends on Zn(2+) as a cofactor.

The catalysed reaction is an S-(2-hydroxyacyl)glutathione + H2O = a 2-hydroxy carboxylate + glutathione + H(+). Its pathway is secondary metabolite metabolism; methylglyoxal degradation; (R)-lactate from methylglyoxal: step 2/2. In terms of biological role, thiolesterase that catalyzes the hydrolysis of S-D-lactoyl-glutathione to form glutathione and D-lactic acid. The protein is Hydroxyacylglutathione hydrolase of Escherichia coli O6:K15:H31 (strain 536 / UPEC).